An 89-amino-acid polypeptide reads, in one-letter code: Small ribosomal subunit protein uS15 (89 aa).

This sequence belongs to the universal ribosomal protein uS15 family. As to quaternary structure, part of the 30S ribosomal subunit. Forms a bridge to the 50S subunit in the 70S ribosome, contacting the 23S rRNA.

In terms of biological role, one of the primary rRNA binding proteins, it binds directly to 16S rRNA where it helps nucleate assembly of the platform of the 30S subunit by binding and bridging several RNA helices of the 16S rRNA. Forms an intersubunit bridge (bridge B4) with the 23S rRNA of the 50S subunit in the ribosome. This is Small ribosomal subunit protein uS15 from Bacillus pumilus (strain SAFR-032).